We begin with the raw amino-acid sequence, 303 residues long: Putative S-adenosyl-L-methionine-dependent methyltransferase SCO6443 (303 aa).

S-adenosyl-L-methionine is bound by residues D130 and 159–160 (DL).

It belongs to the UPF0677 family.

In terms of biological role, exhibits S-adenosyl-L-methionine-dependent methyltransferase activity. This chain is Putative S-adenosyl-L-methionine-dependent methyltransferase SCO6443, found in Streptomyces coelicolor (strain ATCC BAA-471 / A3(2) / M145).